The primary structure comprises 1668 residues: Chitin synthase chs-2 (1668 aa).

Positions 1–19 (MMNTLDHRPLGRMETMEGK) are enriched in basic and acidic residues. The disordered stretch occupies residues 1–51 (MMNTLDHRPLGRMETMEGKPDEDEVPTSSNSDAKGKGYYYSSGTVPTDDST). The Cytoplasmic portion of the chain corresponds to 1 to 116 (MMNTLDHRPL…HGFWHDASLQ (116 aa)). A helical membrane pass occupies residues 117–137 (VLKLATFLVLFLLTLGSAVVA). The Extracellular segment spans residues 138-176 (KSTFILMTSAIGWGGQTITICNQVISEATQNTVKLKNAH). Residues 177–197 (VVKWVWATLLALSAPEALCFV) traverse the membrane as a helical segment. At 198–212 (RSMHRTMFRNVKRPT) the chain is on the cytoplasmic side. Residues 213–233 (FIQFVFVLIIETFHSIGVGIL) traverse the membrane as a helical segment. The Extracellular portion of the chain corresponds to 234-242 (VFRIFPDLD). A helical membrane pass occupies residues 243 to 263 (AVTAAQLTNAMCFVPAILSVI). Over 264–271 (SRKPNKSA) the chain is Cytoplasmic. The helical transmembrane segment at 272–292 (LLLVIIDFAAIAAQSSGFWAL) threads the bilayer. At 293-301 (PMFLPNLQK) the chain is on the extracellular side. A helical membrane pass occupies residues 302-322 (HLVAIPVSLTLISLAWWQNFV). Residues 323–347 (HRDSVFPPVRTLAKFAQRLSERRSK) lie on the Cytoplasmic side of the membrane. A helical membrane pass occupies residues 348-368 (TYAFVSLWKICIYVVCCFLFI). The Extracellular segment spans residues 369-487 (SSRMKIEDML…IYSNYVERNQ (119 aa)). Residue N396 is glycosylated (N-linked (GlcNAc...) asparagine). The helical transmembrane segment at 488–508 (LTMAYDALWLVIFQFGAVFVC) threads the bilayer. Residues 509–522 (YHSSKFACKVMMQR) lie on the Cytoplasmic side of the membrane. A helical membrane pass occupies residues 523–543 (MGFALPMALSVPVTVLLLSTN). At 544–576 (CRMRQKDSCYGTNVLTVELFWQCNGASMSLADF) the chain is on the extracellular side. Residues 577–597 (ILTPQTWIWLCWLASQFWITI) traverse the membrane as a helical segment. Residues 598–1045 (HLWNPKHERL…ISIWYIIYQL (448 aa)) lie on the Cytoplasmic side of the membrane. A helical membrane pass occupies residues 1046-1066 (VMLISSILGPGTIFVMIIGAI). Residues 1067–1074 (SISFSIDT) are Extracellular-facing. A helical transmembrane segment spans residues 1075 to 1095 (LISLVIVSIPVVVFIVVCLTA). Residues 1096–1100 (KPEHQ) lie on the Cytoplasmic side of the membrane. The chain crosses the membrane as a helical span at residues 1101–1121 (LICAQTIGAIFAMLMTAVVVG). Residues 1122–1136 (TSLQLQKDGLLSPHS) are Extracellular-facing. A helical membrane pass occupies residues 1137–1157 (MFTVAVATSFLTAAILHPLEF). Residue T1158 is a topological domain, cytoplasmic. A helical membrane pass occupies residues 1159-1179 (CIIPGTIYFLAIPCMYMLLPI). Residues 1180–1375 (YSVCNMHTVS…RAGLIAIRNS (196 aa)) are Extracellular-facing. The disordered stretch occupies residues 1192–1216 (TREDPRPTEKNTLAKKTPGNLESGD). Residues 1280-1335 (QIDKCSEADEDEQAEIEDALEMSNQSHAAKKNQKWKQAQSEAWLADKALKRAEREY) are a coiled coil. The N-linked (GlcNAc...) asparagine glycan is linked to N1303. A helical transmembrane segment spans residues 1376–1396 (HTVYFLMINIVFIISVLVLQI). The Cytoplasmic segment spans residues 1397–1440 (HKDCLNIEWPLGPKFNHTVRPCYANHDDNQKEEVWVMTRLQLEP). A helical membrane pass occupies residues 1441–1461 (IGLVFLIFFVSILVIQFLAML). At 1462 to 1668 (CHRFGTLAHI…SSGDVELRRF (207 aa)) the chain is on the extracellular side. The segment at 1625 to 1668 (RLFTAQQDQNSPTSDGNRRKSNSRPWDQPTSSATSSGDVELRRF) is disordered. 2 stretches are compositionally biased toward polar residues: residues 1628-1639 (TAQQDQNSPTSD) and 1647-1661 (SRPW…TSSG).

This sequence belongs to the chitin synthase family. Class IV subfamily.

The protein resides in the cell membrane. The catalysed reaction is [(1-&gt;4)-N-acetyl-beta-D-glucosaminyl](n) + UDP-N-acetyl-alpha-D-glucosamine = [(1-&gt;4)-N-acetyl-beta-D-glucosaminyl](n+1) + UDP + H(+). Functionally, may be involved in chitin synthesis in the pharynx during larval development. The protein is Chitin synthase chs-2 of Caenorhabditis elegans.